Consider the following 191-residue polypeptide: Orotate phosphoribosyltransferase (191 aa).

114-122 (EDVVTTGKS) provides a ligand contact to 5-phospho-alpha-D-ribose 1-diphosphate. Positions 118 and 146 each coordinate orotate.

Belongs to the purine/pyrimidine phosphoribosyltransferase family. PyrE subfamily. As to quaternary structure, homodimer. Mg(2+) serves as cofactor.

It catalyses the reaction orotidine 5'-phosphate + diphosphate = orotate + 5-phospho-alpha-D-ribose 1-diphosphate. The protein operates within pyrimidine metabolism; UMP biosynthesis via de novo pathway; UMP from orotate: step 1/2. Its function is as follows. Catalyzes the transfer of a ribosyl phosphate group from 5-phosphoribose 1-diphosphate to orotate, leading to the formation of orotidine monophosphate (OMP). This chain is Orotate phosphoribosyltransferase, found in Clostridium botulinum (strain Kyoto / Type A2).